We begin with the raw amino-acid sequence, 217 residues long: Adenylate kinase (217 aa).

10-15 (GAGKGT) is a binding site for ATP. Residues 30-59 (STGDIFRAAMKNETPMGIEAKKYIDKGELV) are NMP. AMP is bound by residues Thr31, Arg36, 57–59 (ELV), 85–88 (GFPR), and Gln92. The LID stretch occupies residues 126-164 (GRFICRNCGATYHKLYNAPKVEGTCDVCGHHEFYQRDDD). Arg127 contacts ATP. Residues Cys130 and Cys133 each coordinate Zn(2+). 136-137 (TY) is a binding site for ATP. Positions 150 and 153 each coordinate Zn(2+). AMP contacts are provided by Arg161 and Arg172. An ATP-binding site is contributed by Gln200.

The protein belongs to the adenylate kinase family. As to quaternary structure, monomer.

Its subcellular location is the cytoplasm. The enzyme catalyses AMP + ATP = 2 ADP. Its pathway is purine metabolism; AMP biosynthesis via salvage pathway; AMP from ADP: step 1/1. Functionally, catalyzes the reversible transfer of the terminal phosphate group between ATP and AMP. Plays an important role in cellular energy homeostasis and in adenine nucleotide metabolism. The chain is Adenylate kinase from Limosilactobacillus reuteri subsp. reuteri (strain JCM 1112) (Lactobacillus reuteri).